A 175-amino-acid polypeptide reads, in one-letter code: Ribulose bisphosphate carboxylase small subunit, chloroplastic (175 aa).

The transit peptide at 1 to 46 (MAPSVMASSATTVAPFQGLKSTAGMPVARRSGNSSFGNVSNGGRIR) directs the protein to the chloroplast. Residues 60 to 64 (ETLSY) are interaction with large subunit.

This sequence belongs to the RuBisCO small chain family. In terms of assembly, heterohexadecamer of 8 large and 8 small subunits.

It is found in the plastid. It localises to the chloroplast. In terms of biological role, ruBisCO catalyzes two reactions: the carboxylation of D-ribulose 1,5-bisphosphate, the primary event in carbon dioxide fixation, as well as the oxidative fragmentation of the pentose substrate. Both reactions occur simultaneously and in competition at the same active site. Although the small subunit is not catalytic it is essential for maximal activity. The chain is Ribulose bisphosphate carboxylase small subunit, chloroplastic from Oryza sativa subsp. indica (Rice).